Here is a 550-residue protein sequence, read N- to C-terminus: Tether containing UBX domain for GLUT4 (550 aa).

N-acetylalanine is present on A2. Residues 185-320 (AVRSKAPGSP…EPPVDRDPVV (136 aa)) are disordered. S193 carries the post-translational modification Phosphoserine. Residues 193–206 (SPVSSLSADQASSS) show a composition bias toward low complexity. Residues 217–226 (SRGDLNHEGD) show a composition bias toward basic and acidic residues. Polar residues predominate over residues 242–252 (DAQTKQSTSEP). The interval 313-376 (PVDRDPVVYH…LVTKAFREAQ (64 aa)) is interaction with GLUT4. The region spanning 382-458 (ERYPKVALRV…NLFPAALVHF (77 aa)) is the UBX domain. A Phosphoserine modification is found at S496. A disordered region spans residues 496–550 (SPPLLPAPDPVSLESEPIAEDGALGPPEPIQGTAQPVKRSLGKVPKWLKLPASKR).

In terms of assembly, interacts with VCP. Interacts with VCPKMT. Interacts with GLUT4. Ubiquitous.

It localises to the endomembrane system. The protein resides in the endoplasmic reticulum-Golgi intermediate compartment membrane. Its subcellular location is the cytoplasm. It is found in the nucleus. In terms of biological role, enhances VCP methylation catalyzed by VCPKMT. Tethering protein that sequesters GLUT4-containing vesicles in the cytoplasm in the absence of insulin. Modulates the amount of GLUT4 that is available at the cell surface. This is Tether containing UBX domain for GLUT4 (Aspscr1) from Mus musculus (Mouse).